Here is a 94-residue protein sequence, read N- to C-terminus: Defensin alpha 5 (94 aa).

A signal peptide spans 1-19 (MRTIAILAAILLVALQAQA). Cystine bridges form between C65–C93, C67–C82, and C72–C92.

The protein belongs to the alpha-defensin family. Homodimer. Homotetramer. Interacts with B.antracis lef/lethal factor. In terms of processing, glycosylated. Proteolytically cleaved at Arg-62 by trypsin. Both the propeptide form proHD5/HD5(20-94) and HD5(56-94) are cleaved into the lumenal peptide form HD5(63-94) by trypsin. Unprocessed proHD5 exerts antimicrobial activities, but peptide potency is enhanced by peptide processing. Proteolytically cleaved in duodenal fluid; derived fragments are antimicrobially active against commensal bacteria (in vitro).

Its subcellular location is the secreted. The protein resides in the cytoplasmic vesicle. It is found in the secretory vesicle. Host-defense peptide that maintains sterility in the urogenital system. Has antimicrobial activity against a wide range of bacteria, including Gram-negative E.coli, P.aeruginosa and S.typhimurium, and Gram-positive E.aerogenes, S.aureus, B.cereus, E.faecium and L.monocytogenes. Confers resistance to intestinal infection by S.typhimurium. Exhibits antimicrobial activity against enteric commensal bacteria such as B.adolescentis, L.acidophilus, B.breve, L.fermentum, B.longum and S.thermophilus. Binds to bacterial membranes and causes membrane disintegration. Induces the secretion of the chemokine IL-8 by intestinal epithelial cells. Binds to B.antracis lef/lethal factor, a major virulence factor from B.anthracis, and neutralizes its enzymatic activity. In Pan troglodytes (Chimpanzee), this protein is Defensin alpha 5 (DEFA5).